The chain runs to 323 residues: Putative HTH-type transcriptional regulatory protein Mbur_1811 (323 aa).

The HTH cro/C1-type domain maps to 132 to 190; that stretch reads LKEARMNVSMSLGALASELGVSRRTISKYEEGQMDASIDIVLHLEEILDMALAKSIDIL. The segment at residues 143-162 is a DNA-binding region (H-T-H motif); the sequence is LGALASELGVSRRTISKYEE.

The sequence is that of Putative HTH-type transcriptional regulatory protein Mbur_1811 from Methanococcoides burtonii (strain DSM 6242 / NBRC 107633 / OCM 468 / ACE-M).